The primary structure comprises 432 residues: Protein ABHD8 (432 aa).

Disordered regions lie at residues 47 to 69 (KHAG…QGDQ) and 121 to 149 (PAGS…RPKR). Residues 52-61 (APAPTPPPPL) show a composition bias toward pro residues. The segment covering 139 to 149 (GRRRRARRPKR) has biased composition (basic residues). The AB hydrolase-1 domain maps to 170-272 (VLFFIHGVGG…HKVIMINGGG (103 aa)). Active-site charge relay system residues include serine 245, aspartate 363, and histidine 391.

The protein belongs to the AB hydrolase superfamily. As to quaternary structure, interacts with NLRP3 (via NACHT and LLR domains); this interaction is enhanced in the presence of NLRP3 inflammasome inducers, such as ATP, nigericin, silica, or alum. Interacts with ZDHHC12.

The protein resides in the cytoplasm. Negatively regulates NLRP3-driven inflammation. Promotes NLRP3 degradation through the chaperone-mediated autophagy (CMA) pathway, hence attenuating inflammasome activation and IL1B secretion. Acts by recruiting palmitoyltransferase ZDHHC12 to NLRP3, facilitating NLRP3 palmitoylation and subsequent degradation. In Bos taurus (Bovine), this protein is Protein ABHD8.